The primary structure comprises 81 residues: Beta-toxin Ct13 (81 aa).

Residues 1–18 (MKVLILIIASVLLIGVEC) form the signal peptide. One can recognise an LCN-type CS-alpha/beta domain in the interval 19–78 (KDGFPVDSEGCILLPCATRAYCSVNCKFMKGSGGSCDTLACHCKGLPEDAKVQDKPTNKC). 4 cysteine pairs are disulfide-bonded: cysteine 29-cysteine 78, cysteine 34-cysteine 54, cysteine 40-cysteine 59, and cysteine 44-cysteine 61. Cysteine 78 carries the cysteine amide modification.

This sequence belongs to the long (4 C-C) scorpion toxin superfamily. Sodium channel inhibitor family. Beta subfamily. As to expression, expressed by the venom gland.

The protein localises to the secreted. Functionally, beta toxins bind voltage-independently at site-4 of sodium channels (Nav) and shift the voltage of activation toward more negative potentials thereby affecting sodium channel activation and promoting spontaneous and repetitive firing. The sequence is that of Beta-toxin Ct13 from Centruroides tecomanus (Scorpion).